A 666-amino-acid chain; its full sequence is Nuclear distribution protein nudE homolog 1 (666 aa).

A coiled-coil region spans residues 14–195; sequence EEEIAHYREK…KDQLARAIAT (182 aa). Disordered regions lie at residues 40-64, 220-310, 369-388, and 397-666; these read EFQQSSKELEDEMEQELAANDKQQA, DDIN…SGIP, KRVTSTTSTTSSTTTAPAPH, and DHNT…KVKK. The span at 251–274 shows a compositional bias: polar residues; it reads RSGTMSSIPVASPSTKRFSQQIPH. Composition is skewed to low complexity over residues 275–287 and 372–383; these read SPSFSTLSRSTTS and TSTTSTTSSTTT. Over residues 400-410 the composition is skewed to polar residues; the sequence is TTPTAQSQQFP. Composition is skewed to low complexity over residues 449 to 465, 473 to 485, and 536 to 554; these read PTFRSSSTTSNRSLPSR, ASGSARSTTSGTA, and SATPTSGFSSFSASASTSN. 2 stretches are compositionally biased toward polar residues: residues 587-599 and 614-638; these read RQSLSGAGPTPTT and SSLSNMDKPSLMSASSGSRTPSGRP.

It belongs to the nudE family. Self-associates. Interacts with PAC1.

The protein resides in the cytoplasm. Its subcellular location is the cytoskeleton. In terms of biological role, required for nuclear migration. This Cryptococcus neoformans var. neoformans serotype D (strain JEC21 / ATCC MYA-565) (Filobasidiella neoformans) protein is Nuclear distribution protein nudE homolog 1 (NDE1).